A 93-amino-acid chain; its full sequence is UPF0390 protein C24B10.18 (93 aa).

The segment at 1–32 (MAQGEFKKKKNSSANKGGRVTKHSKNPKKGAR) is disordered. Basic residues predominate over residues 19 to 31 (RVTKHSKNPKKGA).

It belongs to the UPF0390 family.

The chain is UPF0390 protein C24B10.18 from Schizosaccharomyces pombe (strain 972 / ATCC 24843) (Fission yeast).